A 432-amino-acid chain; its full sequence is tRNA modification GTPase MnmE (432 aa).

(6S)-5-formyl-5,6,7,8-tetrahydrofolate-binding residues include Arg-23, Glu-85, and Lys-124. Positions 217 to 362 (GARLALIGAP…LKEAVREALL (146 aa)) constitute a TrmE-type G domain. A K(+)-binding site is contributed by Asn-227. GTP-binding positions include 227-232 (NAGKSS), 246-252 (SPIPGTT), and 271-274 (DTAG). Residue Ser-231 participates in Mg(2+) binding. Residues Ser-246, Ile-248, and Thr-251 each contribute to the K(+) site. Thr-252 is a binding site for Mg(2+). Lys-432 serves as a coordination point for (6S)-5-formyl-5,6,7,8-tetrahydrofolate.

It belongs to the TRAFAC class TrmE-Era-EngA-EngB-Septin-like GTPase superfamily. TrmE GTPase family. Homodimer. Heterotetramer of two MnmE and two MnmG subunits. The cofactor is K(+).

It is found in the cytoplasm. Functionally, exhibits a very high intrinsic GTPase hydrolysis rate. Involved in the addition of a carboxymethylaminomethyl (cmnm) group at the wobble position (U34) of certain tRNAs, forming tRNA-cmnm(5)s(2)U34. This chain is tRNA modification GTPase MnmE, found in Thermus thermophilus (strain ATCC 27634 / DSM 579 / HB8).